We begin with the raw amino-acid sequence, 215 residues long: Outer-membrane lipoprotein carrier protein (215 aa).

A signal peptide spans 1–24; that stretch reads MFVLKARHLMAAGLVSLAAWSAGA.

It belongs to the LolA family. As to quaternary structure, monomer.

It is found in the periplasm. Its function is as follows. Participates in the translocation of lipoproteins from the inner membrane to the outer membrane. Only forms a complex with a lipoprotein if the residue after the N-terminal Cys is not an aspartate (The Asp acts as a targeting signal to indicate that the lipoprotein should stay in the inner membrane). The sequence is that of Outer-membrane lipoprotein carrier protein from Ralstonia nicotianae (strain ATCC BAA-1114 / GMI1000) (Ralstonia solanacearum).